Here is a 372-residue protein sequence, read N- to C-terminus: Chaperone protein DnaJ (372 aa).

The 65-residue stretch at 5–69 folds into the J domain; it reads DYYEVLGLTK…QKKARYDQFG (65 aa). The segment at 129–211 adopts a CR-type zinc-finger fold; the sequence is GKETEIEIPK…CRGEGKVQKR (83 aa). Zn(2+) contacts are provided by Cys-142, Cys-145, Cys-159, Cys-162, Cys-185, Cys-188, Cys-199, and Cys-202. CXXCXGXG motif repeat units lie at residues 142–149, 159–166, 185–192, and 199–206; these read CETCHGSG, CSTCNGAG, CTTCHGTG, and CSTCRGEG.

Belongs to the DnaJ family. In terms of assembly, homodimer. Requires Zn(2+) as cofactor.

The protein resides in the cytoplasm. Functionally, participates actively in the response to hyperosmotic and heat shock by preventing the aggregation of stress-denatured proteins and by disaggregating proteins, also in an autonomous, DnaK-independent fashion. Unfolded proteins bind initially to DnaJ; upon interaction with the DnaJ-bound protein, DnaK hydrolyzes its bound ATP, resulting in the formation of a stable complex. GrpE releases ADP from DnaK; ATP binding to DnaK triggers the release of the substrate protein, thus completing the reaction cycle. Several rounds of ATP-dependent interactions between DnaJ, DnaK and GrpE are required for fully efficient folding. Also involved, together with DnaK and GrpE, in the DNA replication of plasmids through activation of initiation proteins. This Lysinibacillus sphaericus (strain C3-41) protein is Chaperone protein DnaJ.